The following is a 42-amino-acid chain: Photosystem II reaction center protein J (42 aa).

Residues 12–32 (LWFVGMIVGLAALGLLGIFFY) form a helical membrane-spanning segment.

This sequence belongs to the PsbJ family. PSII is composed of 1 copy each of membrane proteins PsbA, PsbB, PsbC, PsbD, PsbE, PsbF, PsbH, PsbI, PsbJ, PsbK, PsbL, PsbM, PsbT, PsbX, PsbY, PsbZ, Psb30/Ycf12, at least 3 peripheral proteins of the oxygen-evolving complex and a large number of cofactors. It forms dimeric complexes.

It is found in the plastid. The protein localises to the chloroplast thylakoid membrane. In terms of biological role, one of the components of the core complex of photosystem II (PSII). PSII is a light-driven water:plastoquinone oxidoreductase that uses light energy to abstract electrons from H(2)O, generating O(2) and a proton gradient subsequently used for ATP formation. It consists of a core antenna complex that captures photons, and an electron transfer chain that converts photonic excitation into a charge separation. The sequence is that of Photosystem II reaction center protein J from Nephroselmis olivacea (Green alga).